A 312-amino-acid chain; its full sequence is 2-aminophenol 1,6-dioxygenase subunit beta (312 aa).

Fe cation contacts are provided by histidine 13, histidine 62, and glutamate 251.

Belongs to the LigB/MhpB extradiol dioxygenase family. The APD complex is a heterotetramer of 2 alpha (CnbCa) and 2 beta (CnbCb) subunits. Requires Fe(2+) as cofactor.

The enzyme catalyses 2-aminophenol + O2 = 2-aminomuconate 6-semialdehyde. The catalysed reaction is 2-amino-5-chlorophenol + O2 = 2-amino-5-chloromuconate 6-semialdehyde. It functions in the pathway xenobiotic degradation; nitrobenzene degradation. It participates in xenobiotic degradation; 4-chloronitrobenzene degradation. With respect to regulation, complete loss of activity in the presence of Ni(2+), Co(2+), Cd(2+), Zn(2+) and hydrogen peroxide, however activity with hydrogen peroxide partially restored upon addition of excess ascorbate. Partially inhibited by Fe(2+), Mg(2+), Ca(2+), Mn(2+), Cu(2+) and also by EDTA, at 2 mM concentration. Total activity inhibited in the presence of catechol or 4-nitrocatechol but completely restored after removal of catechol and addition of 2 mM Fe(2+) and 5 mM ascorbate. In terms of biological role, component of the 2-aminophenol 1,6-dioxygenase (APD) complex that catalyzes the ring fission of 2-aminophenol to produce 2-aminomuconic semialdehyde. CnbCb seems to be the catalytic subunit of the complex. Also active on other substrates such as 2-amino-5-chlorophenol (68% activity), protocatechuate (33% activity) and catechol (5% activity). Both 2-aminophenol and 2-amino-5-cholorophenol are likely native substrates for this dioxygenase which is involved in the reductive degradation pathway of both nitrobenzene (NB) and 4-chloronitrobenzene (4-CNB), allowing C.testosteroni strain CNB-1 to grow on these compounds as sole source of carbon, nitrogen, and energy. This chain is 2-aminophenol 1,6-dioxygenase subunit beta, found in Comamonas testosteroni (Pseudomonas testosteroni).